We begin with the raw amino-acid sequence, 266 residues long: U2 small nuclear ribonucleoprotein A' (266 aa).

LRR repeat units follow at residues 30–51 (ILRNLGLEGDDIAMPASLNHLA), 53–74 (PTHILDLTNNDLVFFPDLHHRD), 75–95 (DIETLLLSKNRLMVLDAALLP), and 97–118 (KLKSLSLAFNGIENFETLIPLS). The 39-residue stretch at 132–170 (NPICHLSEYRQRILALVPSLEVLDFKLVSQAEKAQAVKD) folds into the LRRCT domain.

This sequence belongs to the U2 small nuclear ribonucleoprotein A family. In terms of assembly, associated with the spliceosome.

Its subcellular location is the nucleus. Involved in pre-mRNA splicing. In Candida glabrata (strain ATCC 2001 / BCRC 20586 / JCM 3761 / NBRC 0622 / NRRL Y-65 / CBS 138) (Yeast), this protein is U2 small nuclear ribonucleoprotein A' (LEA1).